A 298-amino-acid chain; its full sequence is ATP phosphoribosyltransferase (298 aa).

The protein belongs to the ATP phosphoribosyltransferase family. Long subfamily. It depends on Mg(2+) as a cofactor.

It is found in the cytoplasm. The catalysed reaction is 1-(5-phospho-beta-D-ribosyl)-ATP + diphosphate = 5-phospho-alpha-D-ribose 1-diphosphate + ATP. The protein operates within amino-acid biosynthesis; L-histidine biosynthesis; L-histidine from 5-phospho-alpha-D-ribose 1-diphosphate: step 1/9. Feedback inhibited by histidine. Catalyzes the condensation of ATP and 5-phosphoribose 1-diphosphate to form N'-(5'-phosphoribosyl)-ATP (PR-ATP). Has a crucial role in the pathway because the rate of histidine biosynthesis seems to be controlled primarily by regulation of HisG enzymatic activity. In Aeromonas salmonicida (strain A449), this protein is ATP phosphoribosyltransferase.